The sequence spans 709 residues: Acyl-coenzyme A oxidase 4 (709 aa).

Positions 1–12 (MTFTKKNVSVSQ) are enriched in polar residues. The interval 1 to 29 (MTFTKKNVSVSQGPDPRSSIQKERDSSKW) is disordered.

Belongs to the acyl-CoA oxidase family. Homooctamer. FAD is required as a cofactor.

It is found in the peroxisome. It catalyses the reaction a 2,3-saturated acyl-CoA + O2 = a (2E)-enoyl-CoA + H2O2. It participates in lipid metabolism; peroxisomal fatty acid beta-oxidation. The protein is Acyl-coenzyme A oxidase 4 (POX4) of Candida tropicalis (Yeast).